The primary structure comprises 742 residues: Collectin-12 (742 aa).

The Cytoplasmic portion of the chain corresponds to 1 to 37 (MKDDFAEEEEVQSFGYKRFGIQEGTQCTKCKNNWALK). The chain crosses the membrane as a helical; Signal-anchor for type II membrane protein span at residues 38–58 (FSIILLYILCVLLTITIAILG). At 59 to 742 (YKVVEKMDNV…DMDKEQIFGV (684 aa)) the chain is on the extracellular side. Coiled coils occupy residues 71–101 (GLET…GQKA) and 271–334 (NNSA…QLEE). Positions 439-605 (TILQGPPGPR…SEPTSVPEAN (167 aa)) are disordered. 2 Collagen-like domains span residues 467 to 526 (GQKG…SGDP) and 527 to 586 (GPPG…PGPP). Pro residues predominate over residues 475–492 (PGPPGPAGEKGPPGPIGP). 2 stretches are compositionally biased toward low complexity: residues 502 to 522 (RGSP…LPGP) and 532 to 556 (QGKD…VGEP). Over residues 571 to 589 (PGLPGPKGPPGPPGPPGPG) the composition is skewed to pro residues. Intrachain disulfides connect C607–C618, C635–C730, and C708–C722. In terms of domain architecture, C-type lectin spans 614–731 (YTEKCYYFSI…CEDVNNFICE (118 aa)). Ca(2+) is bound by residues I644, N646, E650, D670, and E674. A carbohydrate contacts are provided by K691, Q694, and D696. Q694, D696, N697, E706, D707, N718, D719, and E731 together coordinate Ca(2+). E706 serves as a coordination point for a carbohydrate. The a carbohydrate site is built by N718 and D719.

In terms of tissue distribution, widely expressed.

It localises to the membrane. Scavenger receptor that displays several functions associated with host defense. Binds to carbohydrates. This Gallus gallus (Chicken) protein is Collectin-12 (COLEC12).